A 199-amino-acid polypeptide reads, in one-letter code: Probable molybdenum cofactor guanylyltransferase (199 aa).

Residues 6-8, K18, D65, and D97 contribute to the GTP site; that span reads LAG. Position 97 (D97) interacts with Mg(2+).

This sequence belongs to the MobA family. It depends on Mg(2+) as a cofactor.

The protein localises to the cytoplasm. The catalysed reaction is Mo-molybdopterin + GTP + H(+) = Mo-molybdopterin guanine dinucleotide + diphosphate. Its function is as follows. Transfers a GMP moiety from GTP to Mo-molybdopterin (Mo-MPT) cofactor (Moco or molybdenum cofactor) to form Mo-molybdopterin guanine dinucleotide (Mo-MGD) cofactor. This is Probable molybdenum cofactor guanylyltransferase from Staphylococcus aureus (strain Mu50 / ATCC 700699).